The primary structure comprises 141 residues: Large ribosomal subunit protein uL11 (141 aa).

Belongs to the universal ribosomal protein uL11 family. In terms of assembly, part of the ribosomal stalk of the 50S ribosomal subunit. Interacts with L10 and the large rRNA to form the base of the stalk. L10 forms an elongated spine to which L12 dimers bind in a sequential fashion forming a multimeric L10(L12)X complex. Post-translationally, one or more lysine residues are methylated.

Functionally, forms part of the ribosomal stalk which helps the ribosome interact with GTP-bound translation factors. The polypeptide is Large ribosomal subunit protein uL11 (Petrotoga mobilis (strain DSM 10674 / SJ95)).